A 1079-amino-acid chain; its full sequence is Zn(2)-C6 fungal-type transcription factor FTF1a (1079 aa).

A DNA-binding region (zn(2)-C6 fungal-type) is located at residues 177–204 (CIACRRKKIRCSGEKPACKQCLHSCIPC).

It is found in the nucleus. In terms of biological role, zn(2)-C6 fungal-type transcription factor that has a role in the establishment of the fungus within the plant and/or the progress of the disease. Regulates the expression of virulence factors such as SIX1 and SIX6. This is Zn(2)-C6 fungal-type transcription factor FTF1a from Fusarium oxysporum f. sp. lycopersici (strain 4287 / CBS 123668 / FGSC 9935 / NRRL 34936) (Fusarium vascular wilt of tomato).